Here is a 338-residue protein sequence, read N- to C-terminus: MLREEVAVSTRTLQWRCVESRTDSKRLYYGRFVLSPLMKGQADTIGIAMRRALLGEIEGTCITHAKSEKIPHEYSTIVGIEESVHEILMNLKEIVLRSNLYGTCDASICVKGPINITAKDIISPPSVEIVDTTQHIASLTEPFDLCIGLQIERNRGYRMKTPNKAQNGSYPIDAVFMPVRNANHSIHSYGNGNEKQEILFLEIWTNGSLTPKEALHEASRNLIDLFIPFLHAEEQDIILEDNQNRVTLPFFTFHDGLAKLKKKNEIALKFIFIDQSELPSRTYNCLKKSNINTLLDLLNKSQEDLLKIEHFRIEDVKRVLGILQKRFVIDLPKNKFSN.

Residues 1 to 233 (MLREEVAVST…DLFIPFLHAE (233 aa)) form an alpha N-terminal domain (alpha-NTD) region. The interval 266–338 (IALKFIFIDQ…IDLPKNKFSN (73 aa)) is alpha C-terminal domain (alpha-CTD).

It belongs to the RNA polymerase alpha chain family. As to quaternary structure, in plastids the minimal PEP RNA polymerase catalytic core is composed of four subunits: alpha, beta, beta', and beta''. When a (nuclear-encoded) sigma factor is associated with the core the holoenzyme is formed, which can initiate transcription.

It localises to the plastid. It is found in the chloroplast. It carries out the reaction RNA(n) + a ribonucleoside 5'-triphosphate = RNA(n+1) + diphosphate. In terms of biological role, DNA-dependent RNA polymerase catalyzes the transcription of DNA into RNA using the four ribonucleoside triphosphates as substrates. The protein is DNA-directed RNA polymerase subunit alpha of Nandina domestica (Heavenly bamboo).